The sequence spans 725 residues: Dolichyl-phosphate-mannose--protein mannosyltransferase 5 (725 aa).

6 helical membrane-spanning segments follow: residues 34–54 (QFAV…LYIP), 117–137 (YLWL…LTFF), 145–165 (SVIS…VTVS), 192–212 (IPFT…LGLN), 219–239 (GLFT…EILG), and 256–276 (VVAF…IHFE). MIR domains lie at 303 to 356 (PLQV…IETK), 368 to 427 (QREV…IRML), and 439 to 495 (LIKL…VESS). An N-linked (GlcNAc...) asparagine glycan is attached at asparagine 409. Helical transmembrane passes span 570–590 (IYYL…LIAI), 619–639 (FYNN…PYCL), 644–664 (LYLH…SQYL), and 673–693 (IIGG…FYEF).

Belongs to the glycosyltransferase 39 family.

It is found in the endoplasmic reticulum membrane. The enzyme catalyses a di-trans,poly-cis-dolichyl beta-D-mannosyl phosphate + L-seryl-[protein] = 3-O-(alpha-D-mannosyl)-L-seryl-[protein] + a di-trans,poly-cis-dolichyl phosphate + H(+). The catalysed reaction is a di-trans,poly-cis-dolichyl beta-D-mannosyl phosphate + L-threonyl-[protein] = 3-O-(alpha-D-mannosyl)-L-threonyl-[protein] + a di-trans,poly-cis-dolichyl phosphate + H(+). Its pathway is protein modification; protein glycosylation. In terms of biological role, protein mannosyltransferase (PMT) involved in hyphal morphogenesis and drug sensitivity. Transfers mannose from Dol-P-mannose to Ser or Thr residues on proteins. PMT1, PMT2 and PMT4 account for most of the protein-O-glycosylation activity, while PMT5 and PMT6 may specifically modulate a much narrower spectrum of target proteins. Required for biofilm formation. This Candida albicans (strain SC5314 / ATCC MYA-2876) (Yeast) protein is Dolichyl-phosphate-mannose--protein mannosyltransferase 5.